We begin with the raw amino-acid sequence, 229 residues long: 7-cyano-7-deazaguanine synthase (229 aa).

Residue 8-18 (FSGGQDSTTCL) coordinates ATP. Cys186, Cys195, Cys198, and Cys201 together coordinate Zn(2+).

This sequence belongs to the QueC family. The cofactor is Zn(2+).

The enzyme catalyses 7-carboxy-7-deazaguanine + NH4(+) + ATP = 7-cyano-7-deazaguanine + ADP + phosphate + H2O + H(+). The protein operates within purine metabolism; 7-cyano-7-deazaguanine biosynthesis. Catalyzes the ATP-dependent conversion of 7-carboxy-7-deazaguanine (CDG) to 7-cyano-7-deazaguanine (preQ(0)). The polypeptide is 7-cyano-7-deazaguanine synthase (Edwardsiella ictaluri (strain 93-146)).